A 388-amino-acid chain; its full sequence is Alanine racemase (388 aa).

Lysine 40 (proton acceptor; specific for D-alanine) is an active-site residue. The residue at position 40 (lysine 40) is an N6-(pyridoxal phosphate)lysine. Residue arginine 137 coordinates substrate. Tyrosine 269 (proton acceptor; specific for L-alanine) is an active-site residue. Substrate is bound at residue methionine 318.

This sequence belongs to the alanine racemase family. Pyridoxal 5'-phosphate serves as cofactor.

The catalysed reaction is L-alanine = D-alanine. The protein operates within amino-acid biosynthesis; D-alanine biosynthesis; D-alanine from L-alanine: step 1/1. In terms of biological role, catalyzes the interconversion of L-alanine and D-alanine. May also act on other amino acids. The sequence is that of Alanine racemase (alr) from Halalkalibacterium halodurans (strain ATCC BAA-125 / DSM 18197 / FERM 7344 / JCM 9153 / C-125) (Bacillus halodurans).